A 472-amino-acid chain; its full sequence is Guanine nucleotide-binding protein alpha-1 subunit (472 aa).

The N-myristoyl glycine moiety is linked to residue glycine 2. The S-palmitoyl cysteine moiety is linked to residue cysteine 3. A G-alpha domain is found at asparagine 40 to isoleucine 472. The tract at residues lysine 43 to threonine 56 is G1 motif. GTP-binding residues include glutamate 51, serine 52, glycine 53, lysine 54, serine 55, and threonine 56. Serine 55 contacts Mg(2+). Residues leucine 127–asparagine 235 form an insert; not present in other G-proteins region. Residues glycine 162–serine 199 form a disordered region. Residue lysine 165 forms a Glycyl lysine isopeptide (Lys-Gly) (interchain with G-Cter in ubiquitin) linkage. Residues aspartate 292–threonine 300 are G2 motif. GTP-binding residues include leucine 294, threonine 300, glycine 322, asparagine 388, lysine 389, aspartate 391, and alanine 444. Threonine 300 lines the Mg(2+) pocket. The segment at phenylalanine 315–arginine 324 is G3 motif. The tract at residues isoleucine 384 to aspartate 391 is G4 motif. A G5 motif region spans residues threonine 442 to threonine 447.

It belongs to the G-alpha family. G(q) subfamily. G proteins are composed of 3 units; alpha, beta and gamma. The alpha chain contains the guanine nucleotide binding site. In its GDP-bound form, binds to the G protein beta-gamma dimer STE4-STE18. Directly interacts with the beta subunit STE4. Probably forms preactivation complexes with unligated receptors STE2 and STE3. Interacts with FUS3. Pheromone-induced activation of GPA1 increases its association with FUS3. Interacts with SCP160. SCP160 binds specifically to the GTP-bound form of GPA1. Interacts with the phosphatidylinositol 3-kinase (PI3K) subunits VPS15 and VPS34 at the endosome. The GTP-bound form of GPA1 binds directly and selectively to the catalytic subunit VPS34, while the GDP-bound form binds to VPS15, which appears to function as an alternative G protein beta subunit for GPA1. Interacts with regulators of G protein signaling (RGS) proteins MDM1, RAX1, RGS2 and SST2, but SST2 alone binds preferentially to the transition state conformation of GPA1, indicating that it acts as a GAP for this G protein. Mg(2+) serves as cofactor. In terms of processing, N-myristoylation by NMT1 is pheromone-stimulated and required for palmitoylation of Cys-3. This lipid modification anchors the protein to membranes. Depalmitoylated by YLR118C/APT1. Monoubiquitination targets the protein for degradation to the vacuole, and polyubiquitination tags the protein for degradation by the proteasome. This may be an additional signaling regulation mechanism.

Its subcellular location is the cell membrane. The protein localises to the endosome membrane. With respect to regulation, alternates between an inactive form bound to GDP and an active form bound to GTP. Activated by the G protein coupled receptors (GPCRs) STE2 and STE3, which serve as guanine nucleotide-exchange factors (GEFs), and inactivated by SST2, probably acting as a GTPase-activating protein (GAP). In terms of biological role, alpha subunit of the heterotrimeric guanine nucleotide-binding protein (G protein) that mediates mating pheromone signal transduction. Binding of alpha-factor or a-factor to its cognate transmembrane receptor STE2 and STE3, respectively, allows the receptor to serve as a guanine nucleotide exchange factor (GEF) on GPA1. The exchange of GDP for GTP on the G protein alpha subunit alters its interaction with the G protein beta subunit STE4, leading to dissociation of the G protein beta-gamma dimer STE4-STE18. The dissociated subunits activate downstream effectors to activate the mating response pathway and induce changes necessary to produce mating-competent cells. STE4-STE18 activate the downstream pheromone signaling MAP kinase cascade leading to expression of mating-specific genes, inducing cell cycle arrest in G1, promoting polarized cell growth to form mating projections (shmoos), and establishing the changes in plasma membrane, cell wall and nuclear envelope to permit cell-cell fusion (plasmogamy) and fusion of the two haploid nuclei (karyogamy). GPA1 transmits a signal that requires direct binding to the effector enzyme PI3K located at the endosome, promoting increased PI3 production. The intrinsic GTPase activity of GPA1 determines the duration of signaling, and is dramatically accelerated by the RGS protein SST2. In unstimulated cells, GDP-bound GPA1 sequesters the G protein beta-gamma subunit STE4-STE18, preventing it from activating the downstream effectors. Also down-regulates the signal by inhibiting the pheromone-induced accumulation of FUS3 in the nucleus. The polypeptide is Guanine nucleotide-binding protein alpha-1 subunit (GPA1) (Saccharomyces cerevisiae (strain ATCC 204508 / S288c) (Baker's yeast)).